Consider the following 590-residue polypeptide: Aspartate--tRNA(Asp/Asn) ligase (590 aa).

E175 provides a ligand contact to L-aspartate. Positions 199–202 are aspartate; that stretch reads QQYK. R221 and H450 together coordinate L-aspartate. Residue 221–223 participates in ATP binding; the sequence is RDE. ATP is bound at residue E484. R491 provides a ligand contact to L-aspartate. Residue 536-539 participates in ATP binding; the sequence is GVDR.

The protein belongs to the class-II aminoacyl-tRNA synthetase family. Type 1 subfamily. Homodimer.

Its subcellular location is the cytoplasm. It catalyses the reaction tRNA(Asx) + L-aspartate + ATP = L-aspartyl-tRNA(Asx) + AMP + diphosphate. Aspartyl-tRNA synthetase with relaxed tRNA specificity since it is able to aspartylate not only its cognate tRNA(Asp) but also tRNA(Asn). Reaction proceeds in two steps: L-aspartate is first activated by ATP to form Asp-AMP and then transferred to the acceptor end of tRNA(Asp/Asn). In Bradyrhizobium sp. (strain ORS 278), this protein is Aspartate--tRNA(Asp/Asn) ligase.